A 60-amino-acid chain; its full sequence is Large ribosomal subunit protein uL30 (60 aa).

The protein belongs to the universal ribosomal protein uL30 family. As to quaternary structure, part of the 50S ribosomal subunit.

The sequence is that of Large ribosomal subunit protein uL30 from Streptococcus pneumoniae (strain Hungary19A-6).